A 386-amino-acid polypeptide reads, in one-letter code: Innexin inx4 (386 aa).

At 1–21 the chain is on the cytoplasmic side; the sequence is MLEFVRPLQSILQIKQVNSTD. Residues 22 to 42 traverse the membrane as a helical segment; sequence LVWRLHCRVTVFLLLLASLLL. Residues 43-111 are Extracellular-facing; the sequence is SARQYFGNPI…ESERSYQKYY (69 aa). A helical membrane pass occupies residues 112–132; that stretch reads QWVVFILALQACMFSVPNFLW. Residues 133–187 are Cytoplasmic-facing; the sequence is KAWEAGRLQSLCDGLTTPIVPDHWEKTRKKQLITYLSADFPRLHRTYLLRYCFCT. Residues 188 to 208 traverse the membrane as a helical segment; sequence LLNFCNVLLNIFLVNVIFSGF. Residues 209–272 are Extracellular-facing; sequence WSNYHPAVKA…LNVVNEKIFA (64 aa). A helical transmembrane segment spans residues 273–293; sequence FIWLWFLGLLVISMLNLLFWI. Over 294–386 the chain is Cytoplasmic; that stretch reads VVLCSKGFRL…DPEGYDEEGV (93 aa). A disordered region spans residues 358 to 386; sequence HNGHKTFRMPKGGEPDFYTDPEGYDEEGV. Acidic residues predominate over residues 374 to 386; it reads FYTDPEGYDEEGV.

It belongs to the pannexin family.

Its subcellular location is the cell membrane. It is found in the cell junction. It localises to the gap junction. In terms of biological role, structural component of gap junctions. Required for normal development of ovary. Required for normal egg production after blood meal. Required for normal development of testis. Functionally, (Microbial infection) Modulates the development of Plasmodium falciparum oocysts. This is Innexin inx4 from Anopheles gambiae (African malaria mosquito).